The chain runs to 215 residues: MAKTLTERFYQPKELKVMGRWSVEDVTVNDPSLRPYINLEARLLPHSHGRHAKKAFGKANVHIVERLINKVMRSGATSHKAGGHFMRRDDRSLMSKKMKAYEVVKEAFMIIERRTKQNPIQVLVRAIENSAPREDTTTIAFGGIRYHMAVDVSPLRRLDIALKNIALGASAKCYRNKTSYAQALAEEIIAAANADPKTFAYSRKEEIERIAQSSR.

Belongs to the universal ribosomal protein uS7 family. In terms of assembly, part of the 30S ribosomal subunit.

Functionally, one of the primary rRNA binding proteins, it binds directly to 16S rRNA where it nucleates assembly of the head domain of the 30S subunit. Is located at the subunit interface close to the decoding center. The sequence is that of Small ribosomal subunit protein uS7 from Thermococcus celer.